Here is a 709-residue protein sequence, read N- to C-terminus: Meiotic sister-chromatid recombination protein 6, mitochondrial (709 aa).

A mitochondrion-targeting transit peptide spans 1–29 (MLRINQRLLVRSLRDAQYQYLKSTALRFL).

It is found in the mitochondrion. May be involved in the control of meiotic sister-chromatid recombination. The polypeptide is Meiotic sister-chromatid recombination protein 6, mitochondrial (MSC6) (Candida glabrata (strain ATCC 2001 / BCRC 20586 / JCM 3761 / NBRC 0622 / NRRL Y-65 / CBS 138) (Yeast)).